A 529-amino-acid chain; its full sequence is UDP-glucuronosyltransferase 2B9 (529 aa).

Residues 1–21 (MSVKWTSVILLIQLSFYFSSG) form the signal peptide. N67, N68, and N88 each carry an N-linked (GlcNAc...) asparagine glycan. The helical transmembrane segment at 494 to 514 (IGFLLACVATVIFVIMKCCLF) threads the bilayer.

It belongs to the UDP-glycosyltransferase family.

Its subcellular location is the microsome membrane. It localises to the endoplasmic reticulum membrane. It catalyses the reaction glucuronate acceptor + UDP-alpha-D-glucuronate = acceptor beta-D-glucuronoside + UDP + H(+). UDPGT is of major importance in the conjugation and subsequent elimination of potentially toxic xenobiotics and endogenous compounds. This isozyme is active on C18, C19, and C21 steroids, bile acids, and several xenobiotics including eugenol, 1-naphthol, and p-nitrophenol. The sequence is that of UDP-glucuronosyltransferase 2B9 (UGT2B9) from Macaca fascicularis (Crab-eating macaque).